A 77-amino-acid polypeptide reads, in one-letter code: Conotoxin S6.11 (77 aa).

The N-terminal stretch at 1–19 is a signal peptide; that stretch reads MEKLTILLLVAAVLMSTQA. Positions 20–50 are excised as a propeptide; sequence LIQGGLDERQKAKSNFFSKRKSNAESWWEGE. 3 disulfides stabilise this stretch: Cys51–Cys65, Cys58–Cys69, and Cys64–Cys74.

This sequence belongs to the conotoxin O2 superfamily. In terms of tissue distribution, expressed by the venom duct.

Its subcellular location is the secreted. The polypeptide is Conotoxin S6.11 (Conus striatus (Striated cone)).